A 501-amino-acid chain; its full sequence is L-ornithine N(5)-monooxygenase (501 aa).

The tract at residues 1-31 (MESVERKSESSYLGMRNMQPEQRLSLDPPRL) is disordered. FAD contacts are provided by residues 83-91 (ERQKQFAWH) and glutamine 102. A substrate-binding site is contributed by lysine 107. Valine 168 lines the FAD pocket. NADP(+) is bound by residues 254-257 (SGQS) and arginine 279. Substrate is bound by residues 293-296 (NEIF) and asparagine 323. 323 to 325 (NYS) serves as a coordination point for NADP(+). Residues 366 to 390 (EHHGPQSRMRIHLKSSKPESEGAAN) form a disordered region. Residues 381–390 (SKPESEGAAN) are compositionally biased toward basic and acidic residues. FAD is bound at residue 466–468 (SLL). A substrate-binding site is contributed by serine 469.

Belongs to the lysine N(6)-hydroxylase/L-ornithine N(5)-oxygenase family. Homotetramer. It depends on FAD as a cofactor.

It carries out the reaction L-ornithine + NADPH + O2 = N(5)-hydroxy-L-ornithine + NADP(+) + H2O. The catalysed reaction is L-ornithine + NADH + O2 = N(5)-hydroxy-L-ornithine + NAD(+) + H2O. It participates in siderophore biosynthesis; ferrichrome biosynthesis. Functionally, L-ornithine N(5)-monooxygenase; part of the siderophore biosynthetic pathway. Aspergillus fumigatus produces four types of siderophores, low-molecular-mass iron chelators, including excreted fusarinine C (FsC) and triacetylfusarinine C (TAFC) for iron uptake; and intacellular ferricrocin (FC) for hyphal and hydroxyferricrocin (HFC) for conidial iron distribution and storage. TAFC consists of three N(2)-acetyl-N(5)-anhydromevalonyl-N(5)-hydroxyornithine residues cyclically linked by ester bonds; FC is a cyclic hexapeptide with the structure Gly-Ser-Gly-(N(5)-acetyl-N(5)-hydroxyornithine)x3. The biosynthesis of all four siderophores depends on the hydroxylation of ornithine, catalyzed by the monooxygenase sidA. SidA is highly specific for its substrate, only hydrolyzing l-ornithine, and has preference for NADPH over NADH, NADPH playing a role in stabilization of the C4a-hydroperoxyflavin intermediate. Subsequently, the pathways for biosynthesis of extra- and intracellular siderophores split. For biosynthesis of extracellular siderophores, the transacylase sidF transfers anhydromevalonyl to N(5)-hydroxyornithine. The required anhydromevalonyl-CoA moiety is derived from mevalonate by CoA ligation and dehydration catalyzed by sidI and sidH respectively. The acetylation of N(5)-hydroxyornithine for FC biosynthesis involves the constitutively expressed sidL. FC is hydroxylated to HFC by an as yet uncharacterized enzyme during conidiation. Assembly of fusarinine C (FsC) and FC is catalyzed by two different nonribosomal peptide synthetases (NRPS), sidD and sidC respectively. Subsequently, sidG catalyzes N2-acetylation of FsC for forming TAFC. Both extra- and intracellular siderophores are crucial for growth during iron limitation and virulence. The protein is L-ornithine N(5)-monooxygenase of Aspergillus fumigatus (strain ATCC MYA-4609 / CBS 101355 / FGSC A1100 / Af293) (Neosartorya fumigata).